Here is a 644-residue protein sequence, read N- to C-terminus: 3-isopropylmalate dehydratase (644 aa).

3 residues coordinate [4Fe-4S] cluster: C400, C460, and C463. The segment at 521–568 (SEIPGTPKQSPRQEVVAEFESEEDDVDSSSVDSAPVATPPSTGDSAGM) is disordered. A compositionally biased stretch (acidic residues) spans 537–547 (AEFESEEDDVD).

Belongs to the aconitase/IPM isomerase family. In terms of assembly, monomer. The cofactor is [4Fe-4S] cluster.

It carries out the reaction (2R,3S)-3-isopropylmalate = (2S)-2-isopropylmalate. The protein operates within amino-acid biosynthesis; L-leucine biosynthesis; L-leucine from 3-methyl-2-oxobutanoate: step 2/4. Functionally, catalyzes the isomerization between 2-isopropylmalate and 3-isopropylmalate, via the formation of 2-isopropylmaleate. In Mucor circinelloides f. lusitanicus (Mucor racemosus var. lusitanicus), this protein is 3-isopropylmalate dehydratase (LEUA).